The primary structure comprises 308 residues: tRNA pseudouridine synthase B (308 aa).

The active-site Nucleophile is the Asp48.

It belongs to the pseudouridine synthase TruB family. Type 1 subfamily.

It carries out the reaction uridine(55) in tRNA = pseudouridine(55) in tRNA. Functionally, responsible for synthesis of pseudouridine from uracil-55 in the psi GC loop of transfer RNAs. The protein is tRNA pseudouridine synthase B of Histophilus somni (strain 129Pt) (Haemophilus somnus).